A 313-amino-acid polypeptide reads, in one-letter code: Pyrimidine-specific ribonucleoside hydrolase RihB (313 aa).

Glu-11 acts as the Proton acceptor in catalysis. Residues Glu-11, Asp-16, and Val-124 each coordinate Ca(2+). Gln-227 and His-239 together coordinate substrate. Asp-240 is a binding site for Ca(2+).

This sequence belongs to the IUNH family. RihB subfamily. Homotetramer. Ca(2+) is required as a cofactor.

The catalysed reaction is a pyrimidine ribonucleoside + H2O = a pyrimidine nucleobase + D-ribose. Functionally, hydrolyzes cytidine or uridine to ribose and cytosine or uracil, respectively. Has a clear preference for cytidine over uridine. Strictly specific for ribonucleosides. This is Pyrimidine-specific ribonucleoside hydrolase RihB from Shigella flexneri serotype 5b (strain 8401).